A 590-amino-acid chain; its full sequence is Sperm-associated microtubule inner protein 4 (590 aa).

Thr219 bears the Phosphothreonine mark. 2 positions are modified to phosphoserine: Ser407 and Ser422. Residue Lys427 forms a Glycyl lysine isopeptide (Lys-Gly) (interchain with G-Cter in SUMO2) linkage. Tyr442 is subject to Phosphotyrosine. Position 485 is a phosphoserine (Ser485). Lys545 participates in a covalent cross-link: Glycyl lysine isopeptide (Lys-Gly) (interchain with G-Cter in SUMO2). Position 547 is a phosphoserine (Ser547).

As to expression, predominantly expressed in the testes.

The protein localises to the cytoplasm. It localises to the cytoskeleton. The protein resides in the microtubule organizing center. It is found in the centrosome. Its subcellular location is the flagellum axoneme. Functionally, microtubule inner protein (MIP) part of the dynein-decorated doublet microtubules (DMTs) in flagellum axoneme. May serve to reinforce and thus stabilize the microtubule structure in the sperm flagella. The protein is Sperm-associated microtubule inner protein 4 of Homo sapiens (Human).